Reading from the N-terminus, the 373-residue chain is Putative citrate synthase 2 (373 aa).

Active-site residues include H250 and E303.

The protein belongs to the citrate synthase family.

It carries out the reaction oxaloacetate + acetyl-CoA + H2O = citrate + CoA + H(+). It participates in carbohydrate metabolism; tricarboxylic acid cycle; isocitrate from oxaloacetate: step 1/2. This chain is Putative citrate synthase 2 (citA), found in Mycobacterium bovis (strain ATCC BAA-935 / AF2122/97).